The sequence spans 214 residues: tRNA (guanine-N(7)-)-methyltransferase (214 aa).

The S-adenosyl-L-methionine site is built by glutamate 44, glutamate 69, aspartate 96, and aspartate 118. Residue aspartate 118 is part of the active site. Substrate-binding positions include lysine 122, aspartate 154, and 191–194; that span reads TEYE.

Belongs to the class I-like SAM-binding methyltransferase superfamily. TrmB family.

The enzyme catalyses guanosine(46) in tRNA + S-adenosyl-L-methionine = N(7)-methylguanosine(46) in tRNA + S-adenosyl-L-homocysteine. It participates in tRNA modification; N(7)-methylguanine-tRNA biosynthesis. In terms of biological role, catalyzes the formation of N(7)-methylguanine at position 46 (m7G46) in tRNA. The sequence is that of tRNA (guanine-N(7)-)-methyltransferase from Listeria monocytogenes serovar 1/2a (strain ATCC BAA-679 / EGD-e).